Here is a 374-residue protein sequence, read N- to C-terminus: Methylthioribose-1-phosphate isomerase (374 aa).

N-acetylserine is present on serine 2. Residue aspartate 253 is the Proton donor of the active site.

It belongs to the eIF-2B alpha/beta/delta subunits family. MtnA subfamily.

The protein localises to the cytoplasm. Its subcellular location is the nucleus. The catalysed reaction is 5-(methylsulfanyl)-alpha-D-ribose 1-phosphate = 5-(methylsulfanyl)-D-ribulose 1-phosphate. The protein operates within amino-acid biosynthesis; L-methionine biosynthesis via salvage pathway; L-methionine from S-methyl-5-thio-alpha-D-ribose 1-phosphate: step 1/6. Catalyzes the interconversion of methylthioribose-1-phosphate (MTR-1-P) into methylthioribulose-1-phosphate (MTRu-1-P). In Arabidopsis thaliana (Mouse-ear cress), this protein is Methylthioribose-1-phosphate isomerase.